A 655-amino-acid chain; its full sequence is D-xylonate dehydratase YagF (655 aa).

This sequence belongs to the IlvD/Edd family.

It catalyses the reaction D-xylonate = 2-dehydro-3-deoxy-D-arabinonate + H2O. Catalyzes the dehydration of D-xylonic acid to form 2-dehydro-3-deoxy-D-pentonate. The polypeptide is D-xylonate dehydratase YagF (yagF) (Escherichia coli (strain K12)).